The chain runs to 338 residues: Ketol-acid reductoisomerase (NADP(+)) (338 aa).

The KARI N-terminal Rossmann domain occupies 1 to 181 (MRVFYDKDCD…GGGRTGIIET (181 aa)). NADP(+) is bound by residues 24 to 27 (YGSQ), Arg47, Ser50, Thr52, and 82 to 85 (DEFQ). The active site involves His107. NADP(+) is bound at residue Gly133. A KARI C-terminal knotted domain is found at 182–327 (TFKDETETDL…EKLRAMMPWI (146 aa)). Positions 190, 194, 226, and 230 each coordinate Mg(2+). Ser251 is a binding site for substrate.

This sequence belongs to the ketol-acid reductoisomerase family. Requires Mg(2+) as cofactor.

The enzyme catalyses (2R)-2,3-dihydroxy-3-methylbutanoate + NADP(+) = (2S)-2-acetolactate + NADPH + H(+). It carries out the reaction (2R,3R)-2,3-dihydroxy-3-methylpentanoate + NADP(+) = (S)-2-ethyl-2-hydroxy-3-oxobutanoate + NADPH + H(+). It participates in amino-acid biosynthesis; L-isoleucine biosynthesis; L-isoleucine from 2-oxobutanoate: step 2/4. The protein operates within amino-acid biosynthesis; L-valine biosynthesis; L-valine from pyruvate: step 2/4. In terms of biological role, involved in the biosynthesis of branched-chain amino acids (BCAA). Catalyzes an alkyl-migration followed by a ketol-acid reduction of (S)-2-acetolactate (S2AL) to yield (R)-2,3-dihydroxy-isovalerate. In the isomerase reaction, S2AL is rearranged via a Mg-dependent methyl migration to produce 3-hydroxy-3-methyl-2-ketobutyrate (HMKB). In the reductase reaction, this 2-ketoacid undergoes a metal-dependent reduction by NADPH to yield (R)-2,3-dihydroxy-isovalerate. This Pseudomonas paraeruginosa (strain DSM 24068 / PA7) (Pseudomonas aeruginosa (strain PA7)) protein is Ketol-acid reductoisomerase (NADP(+)).